We begin with the raw amino-acid sequence, 469 residues long: Ribulose bisphosphate carboxylase large chain (469 aa).

Positions 1 to 2 are excised as a propeptide; the sequence is MS. An N-acetylproline modification is found at Pro-3. Lys-14 is modified (N6,N6,N6-trimethyllysine). Residues Asn-123 and Thr-173 each coordinate substrate. Lys-175 (proton acceptor) is an active-site residue. Lys-177 is a substrate binding site. Mg(2+)-binding residues include Lys-201, Asp-203, and Glu-204. N6-carboxylysine is present on Lys-201. His-294 functions as the Proton acceptor in the catalytic mechanism. Substrate is bound by residues Arg-295, His-327, and Ser-379.

This sequence belongs to the RuBisCO large chain family. Type I subfamily. Heterohexadecamer of 8 large chains and 8 small chains; disulfide-linked. The disulfide link is formed within the large subunit homodimers. Requires Mg(2+) as cofactor. Post-translationally, the disulfide bond which can form in the large chain dimeric partners within the hexadecamer appears to be associated with oxidative stress and protein turnover.

It is found in the plastid. The protein resides in the chloroplast. It carries out the reaction 2 (2R)-3-phosphoglycerate + 2 H(+) = D-ribulose 1,5-bisphosphate + CO2 + H2O. The catalysed reaction is D-ribulose 1,5-bisphosphate + O2 = 2-phosphoglycolate + (2R)-3-phosphoglycerate + 2 H(+). Its function is as follows. RuBisCO catalyzes two reactions: the carboxylation of D-ribulose 1,5-bisphosphate, the primary event in carbon dioxide fixation, as well as the oxidative fragmentation of the pentose substrate in the photorespiration process. Both reactions occur simultaneously and in competition at the same active site. The polypeptide is Ribulose bisphosphate carboxylase large chain (Iris ensata (Japanese iris)).